The following is a 152-amino-acid chain: MAQEAGLIPPPPHLSNPRFTLELEFVLSLANPYYISHLAVTYPHLLGISSQSTDNDDPSASSDAKAFAAYLAYLYDYWKRPEYVQFLTHPGATLRALRLLQEESFRKAVIRPQVIEALLGTTTEVDLHVESEEDREKNNEEQAEKGSNGATS.

The span at 126–144 (DLHVESEEDREKNNEEQAE) shows a compositional bias: basic and acidic residues. Residues 126–152 (DLHVESEEDREKNNEEQAEKGSNGATS) are disordered.

The protein belongs to the Mediator complex subunit 31 family. In terms of assembly, component of the Mediator complex.

It localises to the nucleus. Its function is as follows. Component of the Mediator complex, a coactivator involved in the regulated transcription of nearly all RNA polymerase II-dependent genes. Mediator functions as a bridge to convey information from gene-specific regulatory proteins to the basal RNA polymerase II transcription machinery. Mediator is recruited to promoters by direct interactions with regulatory proteins and serves as a scaffold for the assembly of a functional preinitiation complex with RNA polymerase II and the general transcription factors. This is Mediator of RNA polymerase II transcription subunit 31 (SOH1) from Coccidioides immitis (strain RS) (Valley fever fungus).